Reading from the N-terminus, the 316-residue chain is MTEDPKQIAQETESLRKVAFFGIAVSTIATLTAIIAVPMLYNYMQHVQSSLQSEVEFCQHRSNGLWDEYKRFQGVSGVEGRIKRDAYHRSLGVSGASRKARRQSYGNDAAVGGFGGSSGGSCCSCGSGAAGPAGSPGQDGAPGNDGAPGAPGNPGQDASEDQTAGPDSFCFDCPAGPPGPSGAPGQKGPSGAPGAPGQSGGAALPGPPGPAGPPGPAGQPGSNGNAGAPGAPGQVVDVPGTPGPAGPPGSPGPAGAPGQPGQAGSSQPGGPGPQGDAGAPGAPGAPGQAGAPGQDGESGSEGACDHCPPPRTAPGY.

A signal peptide spans 1–36; that stretch reads MTEDPKQIAQETESLRKVAFFGIAVSTIATLTAIIA. Composition is skewed to low complexity over residues 127 to 157 and 183 to 204; these read SGAA…PGQD and APGQ…GAAL. The tract at residues 127 to 316 is disordered; the sequence is SGAAGPAGSP…CPPPRTAPGY (190 aa). Triple-helical region stretches follow at residues 128 to 157, 176 to 202, 206 to 235, 240 to 266, and 269 to 304; these read GAAG…PGQD, GPPG…SGGA, GPPG…PGQV, GTPG…AGSS, and GGPG…EGAC. The segment covering 205 to 217 has biased composition (pro residues); sequence PGPPGPAGPPGPA. Over residues 219 to 234 the composition is skewed to low complexity; the sequence is QPGSNGNAGAPGAPGQ. The segment covering 241 to 251 has biased composition (pro residues); that stretch reads TPGPAGPPGSP. 2 stretches are compositionally biased toward low complexity: residues 256-266 and 276-295; these read APGQPGQAGSS and DAGA…PGQD. Residues 307–316 show a composition bias toward pro residues; sequence CPPPRTAPGY.

It belongs to the cuticular collagen family. In terms of assembly, collagen polypeptide chains are complexed within the cuticle by disulfide bonds and other types of covalent cross-links.

Nematode cuticles are composed largely of collagen-like proteins. The cuticle functions both as an exoskeleton and as a barrier to protect the worm from its environment. The chain is Cuticle collagen 12 (col-12) from Caenorhabditis elegans.